The following is a 426-amino-acid chain: Serine/threonine-protein kinase SRPK (426 aa).

Residues 1–23 (MENIFKEKEKGKEKAKEEEKEND) are compositionally biased toward basic and acidic residues. The disordered stretch occupies residues 1 to 40 (MENIFKEKEKGKEKAKEEEKENDSGDLFDSEDEGTEDYKK). Over residues 24–35 (SGDLFDSEDEGT) the composition is skewed to acidic residues. The Protein kinase domain maps to 56–419 (YRIVKKLGWG…ARDSLEHPYM (364 aa)). ATP is bound by residues 62–70 (LGWGHFSTV) and Lys86. Catalysis depends on Asp188, which acts as the Proton acceptor. Positions 318–328 (PKKGDKYDKTD) match the Nuclear localization signal motif.

Belongs to the protein kinase superfamily. CMGC Ser/Thr protein kinase family.

It is found in the nucleus. It catalyses the reaction L-seryl-[protein] + ATP = O-phospho-L-seryl-[protein] + ADP + H(+). The enzyme catalyses L-threonyl-[protein] + ATP = O-phospho-L-threonyl-[protein] + ADP + H(+). In terms of biological role, phosphorylates serine/arginine-rich protein PSR. The protein is Serine/threonine-protein kinase SRPK of Physarum polycephalum (Slime mold).